A 330-amino-acid chain; its full sequence is Probable deoxyhypusine synthase (330 aa).

The segment at 1–25 is disordered; that stretch reads MTGDDADETHENVVPGSDEDLDTPD. The active-site Nucleophile is Lys-298.

It belongs to the deoxyhypusine synthase family. NAD(+) serves as cofactor.

It carries out the reaction [eIF5A protein]-L-lysine + spermidine = [eIF5A protein]-deoxyhypusine + propane-1,3-diamine. The protein operates within protein modification; eIF5A hypusination. Catalyzes the NAD-dependent oxidative cleavage of spermidine and the subsequent transfer of the butylamine moiety of spermidine to the epsilon-amino group of a specific lysine residue of the eIF-5A precursor protein to form the intermediate deoxyhypusine residue. The protein is Probable deoxyhypusine synthase of Halobacterium salinarum (strain ATCC 29341 / DSM 671 / R1).